The sequence spans 278 residues: Urease accessory protein UreD (278 aa).

Belongs to the UreD family. UreD, UreF and UreG form a complex that acts as a GTP-hydrolysis-dependent molecular chaperone, activating the urease apoprotein by helping to assemble the nickel containing metallocenter of UreC. The UreE protein probably delivers the nickel.

It is found in the cytoplasm. In terms of biological role, required for maturation of urease via the functional incorporation of the urease nickel metallocenter. This is Urease accessory protein UreD from Staphylococcus aureus (strain bovine RF122 / ET3-1).